A 390-amino-acid polypeptide reads, in one-letter code: MQNLNVGLIGGGFMGKAHSLAYAAMPMFFWPAPALPVRKVIAEANPELAAEAARRFGFENSTSDWRSIIDDPDIHVVDIATPNHLHAEIAIAAAEAGKHIICEKPLARTGEESKAMYDAVKDKNIVHMVAFNYRRTPAVALAKKYIEEGAIGRILSFRGTYLQDWSADPNSPLSWRFQKSIAGSGALGDIATHVIDMARYLVGEFSAVNAVLSTWIPERPLQSGGADALGTVRGGEGPKGPVDVDDEVMTMIRFANGAVGSVEATRNAHGRNNYITFEIHGTEGSIVFNYERRDELQVAFASDQADRRGFRTVYTGPAHPYGEGLWPIPALGIGYGETKIIEAHDFFKAIAEGGSVSPSFADGYQVALIDDAIVESAAKESWVDVPQISA.

Positions 13, 14, 43, 81, 83, 86, 103, 104, 130, and 132 each coordinate NADH. Residue lysine 104 participates in levoglucosan binding. The levoglucosan site is built by tyrosine 133 and glutamine 163. 2 residues coordinate NADH: tryptophan 175 and arginine 176. Positions 176, 189, and 193 each coordinate levoglucosan. Tyrosine 335 lines the NADH pocket.

The protein belongs to the Gfo/Idh/MocA family. Homotetramer.

It catalyses the reaction levoglucosan + NAD(+) = 3-dehydrolevoglucosan + NADH + H(+). Catalyzes the oxidation of levoglucosan (1,6-anhydro-beta-D-glucose, LG) to 3-dehydrolevoglucosan (3-keto-LG). Exhibits high substrate specificity toward levoglucosan and NAD(+) for the oxidative reaction. Exhibits weak activities (about 4% compared with that of LG) toward L-sorbose and 1,5-anhydro-D-glucitol, and activity toward D-xylose is also detectable (1.7%). Can also efficiently catalyzes the NADH-dependent reduction (reverse reaction) of 3-keto-LG. The chain is Levoglucosan dehydrogenase from Pseudarthrobacter phenanthrenivorans (strain DSM 18606 / JCM 16027 / LMG 23796 / Sphe3) (Arthrobacter phenanthrenivorans).